A 1181-amino-acid polypeptide reads, in one-letter code: Integrin alpha-2 (1181 aa).

The signal sequence occupies residues 1 to 29 (MGPERTGAAPLPLLLVLALSQGILNCCLA). The Extracellular segment spans residues 30–1132 (YNVGLPEAKI…KPDEKAEVPT (1103 aa)). 2 FG-GAP repeats span residues 34–92 (LPEA…TATC) and 101–161 (TSIP…LSAS). Cysteine 83 and cysteine 92 are joined by a disulfide. 3 N-linked (GlcNAc...) asparagine glycosylation sites follow: asparagine 105, asparagine 112, and asparagine 343. Residues 188–365 (WDAVKNFLEK…TLGEQIFSIE (178 aa)) enclose the VWFA domain. FG-GAP repeat units lie at residues 366 to 420 (GTVQ…LIFP), 423 to 475 (AFDQ…ENGN), 477 to 539 (TVIQ…ILGQ), 540 to 598 (HQFL…TIRT), and 602 to 664 (QKIL…FTPE). Residues asparagine 432, asparagine 460, and asparagine 475 are each glycosylated (N-linked (GlcNAc...) asparagine). 12 residues coordinate Ca(2+): aspartate 499, aspartate 501, aspartate 503, aspartate 507, aspartate 563, asparagine 565, aspartate 567, aspartate 571, aspartate 627, asparagine 629, aspartate 631, and aspartate 635. Cystine bridges form between cysteine 680-cysteine 737, cysteine 789-cysteine 795, cysteine 865-cysteine 876, cysteine 1019-cysteine 1050, and cysteine 1055-cysteine 1060. Asparagine 699 carries N-linked (GlcNAc...) asparagine glycosylation. N-linked (GlcNAc...) asparagine glycans are attached at residues asparagine 1057, asparagine 1074, and asparagine 1081. A helical membrane pass occupies residues 1133 to 1154 (GVIIGSIIAGILLLLALVAILW). The interval 1155-1161 (KLGFFKR) is interaction with HPS5. The Cytoplasmic segment spans residues 1155–1181 (KLGFFKRKYEKMTKNPDEIDETTELSS). Positions 1157–1161 (GFFKR) match the GFFKR motif motif.

Belongs to the integrin alpha chain family. Heterodimer of an alpha and a beta subunit. Alpha-2 associates with beta-1. Interacts with HPS5 and RAB21. In terms of assembly, (Microbial infection) Integrin ITGA2:ITGB1 interacts (via ITAG2 I-domain) with rotavirus A VP4 protein. As to quaternary structure, (Microbial infection) Integrin ITGA2:ITGB1 interacts with human echoviruses 1 and 8 capsid proteins.

The protein resides in the membrane. Its function is as follows. Integrin alpha-2/beta-1 is a receptor for laminin, collagen, collagen C-propeptides, fibronectin and E-cadherin. It recognizes the proline-hydroxylated sequence G-F-P-G-E-R in collagen. It is responsible for adhesion of platelets and other cells to collagens, modulation of collagen and collagenase gene expression, force generation and organization of newly synthesized extracellular matrix. (Microbial infection) Integrin ITGA2:ITGB1 acts as a receptor for Human rotavirus A. Functionally, (Microbial infection) Integrin ITGA2:ITGB1 acts as a receptor for Human echoviruses 1 and 8. This chain is Integrin alpha-2 (ITGA2), found in Homo sapiens (Human).